We begin with the raw amino-acid sequence, 93 residues long: Small ribosomal subunit protein bS6 (93 aa).

This sequence belongs to the bacterial ribosomal protein bS6 family.

Its function is as follows. Binds together with bS18 to 16S ribosomal RNA. This Treponema denticola (strain ATCC 35405 / DSM 14222 / CIP 103919 / JCM 8153 / KCTC 15104) protein is Small ribosomal subunit protein bS6.